The primary structure comprises 301 residues: N-acetylmuramic acid 6-phosphate etherase (301 aa).

Positions 57-220 (IAETFMKNGR…TTGAMIKTGK (164 aa)) constitute an SIS domain. Glu85 functions as the Proton donor in the catalytic mechanism. The active site involves Glu116.

Belongs to the GCKR-like family. MurNAc-6-P etherase subfamily. In terms of assembly, homodimer.

The enzyme catalyses N-acetyl-D-muramate 6-phosphate + H2O = N-acetyl-D-glucosamine 6-phosphate + (R)-lactate. It participates in amino-sugar metabolism; 1,6-anhydro-N-acetylmuramate degradation. Its pathway is amino-sugar metabolism; N-acetylmuramate degradation. The protein operates within cell wall biogenesis; peptidoglycan recycling. Specifically catalyzes the cleavage of the D-lactyl ether substituent of MurNAc 6-phosphate, producing GlcNAc 6-phosphate and D-lactate. Together with AnmK, is also required for the utilization of anhydro-N-acetylmuramic acid (anhMurNAc) either imported from the medium or derived from its own cell wall murein, and thus plays a role in cell wall recycling. The sequence is that of N-acetylmuramic acid 6-phosphate etherase from Pasteurella multocida (strain Pm70).